Here is an 80-residue protein sequence, read N- to C-terminus: uncharacterized protein (80 aa).

Residues 10–29 (FVAREYPLVVVPFIYFVLFL) traverse the membrane as a helical segment.

It is found in the membrane. This is an uncharacterized protein from Saccharomyces cerevisiae (strain ATCC 204508 / S288c) (Baker's yeast).